Consider the following 342-residue polypeptide: Type II restriction enzyme CviAII (342 aa).

It carries out the reaction Endonucleolytic cleavage of DNA to give specific double-stranded fragments with terminal 5'-phosphates.. Functionally, a P subtype restriction enzyme that recognizes the double-stranded sequence 5'-CATG-3' and cleaves after C-1. The protein is Type II restriction enzyme CviAII (CVIAIIR) of Chlorella (PBCV-1).